A 729-amino-acid polypeptide reads, in one-letter code: MACPRVIFLILITFFILQTAFSSSWQTLSGKPPAVIARGGFSGMFPDSSIQAYQLVNITTSPDVMLWCDLQLTKDGVGICFPNLKLDNGSNVIRIDPHYKERFSVDFTWKELSDVKLAQGVVSRPYIFDDVSSILAIEEVAKLTASGLWLNIQDSAFYAKHNLSMRNSVVSLSRRLKVNFISSPGISFLKSMKNSVKPTVTKLIFRFLKQEHIEPFTNQSYGSLAKNLSYIRTFSSGILVPKSYIWPVDSALYLQPHTSLVTDAHKEGLQVFASEFANDFVIAYNYSYDPTAEYLSFIDNGNFSVDGFLSDFPVTPYRAINCFSHVDPKRAKEQAKITIISKNGASGDFPGCTDLAYQRAASDGADILDCNVQMSKDKIPFCMSSFDLINSTNVIETSFRNLSSVVSEINPRRSGIYTFSLTMSQIQTLKPTISNLEKDSGLFRNPRNNKAGKFLTLSEFLFLPNRYSSLLGLLIEVENAAYLVEHQGISVVDAVLDELKRATTQQNKTSARTILIQSTDKSVLMKFKEKNKMNHDELVYRVDDNIRDVADSAIKDIKNFAGSIVISKKSVFPYKGFIILEKETNIASKLKSNGLRVYVERFSNECVTHAFDFYDDPTLEIDSFVRDVQIDGIITDFPATTARYRKNKCYGEFGLTTTGELITFANPMLLPPAEAPYPALLDSDVTEPPLPEARSQPPASSPSKAEEKAIEVPFAFIAMAILVCFFISV.

The signal sequence occupies residues methionine 1–serine 22. GP-PDE domains are found at residues proline 33–isoleucine 320 and isoleucine 337–arginine 645. N-linked (GlcNAc...) asparagine glycosylation is found at asparagine 88, asparagine 162, asparagine 218, asparagine 227, asparagine 285, asparagine 302, asparagine 390, asparagine 401, and asparagine 507. The chain crosses the membrane as a helical span at residues alanine 709 to valine 729.

Belongs to the glycerophosphoryl diester phosphodiesterase family. Expressed in stems, flowers and siliques.

It localises to the membrane. It catalyses the reaction a sn-glycero-3-phosphodiester + H2O = an alcohol + sn-glycerol 3-phosphate + H(+). This Arabidopsis thaliana (Mouse-ear cress) protein is Glycerophosphodiester phosphodiesterase GDPDL5.